The sequence spans 572 residues: Phosphoenolpyruvate-protein phosphotransferase (572 aa).

The Tele-phosphohistidine intermediate role is filled by H191. Phosphoenolpyruvate is bound by residues R298 and R334. Mg(2+) is bound by residues E433 and D457. Phosphoenolpyruvate is bound by residues 456-457 (ND) and R467. Catalysis depends on C504, which acts as the Proton donor.

The protein belongs to the PEP-utilizing enzyme family. As to quaternary structure, homodimer. It depends on Mg(2+) as a cofactor.

The protein resides in the cytoplasm. The catalysed reaction is L-histidyl-[protein] + phosphoenolpyruvate = N(pros)-phospho-L-histidyl-[protein] + pyruvate. Its function is as follows. General (non sugar-specific) component of the phosphoenolpyruvate-dependent sugar phosphotransferase system (sugar PTS). This major carbohydrate active-transport system catalyzes the phosphorylation of incoming sugar substrates concomitantly with their translocation across the cell membrane. Enzyme I transfers the phosphoryl group from phosphoenolpyruvate (PEP) to the phosphoryl carrier protein (HPr). The chain is Phosphoenolpyruvate-protein phosphotransferase from Staphylococcus aureus (strain MSSA476).